A 361-amino-acid polypeptide reads, in one-letter code: Uroporphyrinogen decarboxylase (361 aa).

Substrate-binding positions include 27 to 31, aspartate 77, tyrosine 154, threonine 209, and histidine 327; that span reads RQAGR.

The protein belongs to the uroporphyrinogen decarboxylase family. As to quaternary structure, homodimer.

It is found in the cytoplasm. The catalysed reaction is uroporphyrinogen III + 4 H(+) = coproporphyrinogen III + 4 CO2. It participates in porphyrin-containing compound metabolism; protoporphyrin-IX biosynthesis; coproporphyrinogen-III from 5-aminolevulinate: step 4/4. Catalyzes the decarboxylation of four acetate groups of uroporphyrinogen-III to yield coproporphyrinogen-III. This is Uroporphyrinogen decarboxylase from Coxiella burnetii (strain Dugway 5J108-111).